A 501-amino-acid chain; its full sequence is Zinc finger and SCAN domain-containing protein 12 (501 aa).

Glycyl lysine isopeptide (Lys-Gly) (interchain with G-Cter in SUMO2) cross-links involve residues K20 and K26. The SCAN box domain occupies 51–132; that stretch reads QFCYQETSGP…DLERELDELG (82 aa). Positions 175–194 are disordered; that stretch reads REAQEEQVSGVETGNEPRNV. The segment covering 180-194 has biased composition (polar residues); sequence EQVSGVETGNEPRNV. K197 is covalently cross-linked (Glycyl lysine isopeptide (Lys-Gly) (interchain with G-Cter in SUMO2)). Positions 223–255 are disordered; the sequence is EAHNPGEESSGISHEDSQPLRNENGVNSPANSE. Residues 241 to 253 are compositionally biased toward polar residues; sequence PLRNENGVNSPAN. C2H2-type zinc fingers lie at residues 269 to 291, 297 to 319, 325 to 347, 353 to 375, 381 to 403, and 409 to 431; these read HGCD…KRVH, YKCE…KVVH, YKCN…QRLH, YHCN…LKSH, YQCL…QGVH, and YECN…QETH. The interval 429–450 is disordered; sequence ETHHKEKPFTQSGPIQQQRNHT. Polar residues predominate over residues 437–447; that stretch reads FTQSGPIQQQR. Residues 455–477 form a C2H2-type 7 zinc finger; the sequence is YKCSVCGKAFIQKISLIEHEQIH. The C2H2-type 8; degenerate zinc finger occupies 483 to 501; it reads YKCAEGGKAFIQMSELTEH.

It belongs to the krueppel C2H2-type zinc-finger protein family. As to expression, testis specific.

It is found in the nucleus. Functionally, may be involved in transcriptional regulation. In Mus musculus (Mouse), this protein is Zinc finger and SCAN domain-containing protein 12 (Zscan12).